Reading from the N-terminus, the 128-residue chain is Large ribosomal subunit protein bL17 (128 aa).

This sequence belongs to the bacterial ribosomal protein bL17 family. In terms of assembly, part of the 50S ribosomal subunit. Contacts protein L32.

This Klebsiella pneumoniae (strain 342) protein is Large ribosomal subunit protein bL17.